A 206-amino-acid chain; its full sequence is Probable glutathione S-transferase 8 (206 aa).

The GST N-terminal domain occupies 2 to 79 (VHYKLSYFPI…FLARQFGING (78 aa)). Residues Tyr8, Trp39, Lys43, 49–51 (GQL), and 63–64 (QS) contribute to the glutathione site. The GST C-terminal domain occupies 81–206 (CAWEEAQVNS…WLETRPETQF (126 aa)).

The protein belongs to the GST superfamily. Sigma family.

It catalyses the reaction RX + glutathione = an S-substituted glutathione + a halide anion + H(+). Functionally, conjugation of reduced glutathione to a wide number of exogenous and endogenous hydrophobic electrophiles. The sequence is that of Probable glutathione S-transferase 8 (gst-8) from Caenorhabditis elegans.